Consider the following 196-residue polypeptide: Large ribosomal subunit protein eL15 (196 aa).

Positions 162–196 (RGLTNAGRSNRGLQNRGKGAEHTRPSAGSGSRRGK) are disordered.

It belongs to the eukaryotic ribosomal protein eL15 family.

The sequence is that of Large ribosomal subunit protein eL15 from Haloquadratum walsbyi (strain DSM 16790 / HBSQ001).